Here is a 326-residue protein sequence, read N- to C-terminus: Protein TMED8 (326 aa).

The disordered stretch occupies residues 1–80; the sequence is MSDLQAAEGP…VSPGSKDATE (80 aa). One can recognise a GOLD domain in the interval 160-324; it reads PPCIWTFAKV…NKTLYFHIYY (165 aa). Lys-170 carries the N6-acetyllysine modification. The disordered stretch occupies residues 238 to 268; sequence DSCDDEDEEEEEEEEIEEPVPAGDVERGSRS. Positions 239–255 are enriched in acidic residues; sequence SCDDEDEEEEEEEEIEE.

The chain is Protein TMED8 (TMED8) from Pongo abelii (Sumatran orangutan).